Here is a 135-residue protein sequence, read N- to C-terminus: Large ribosomal subunit protein bL19 (135 aa).

It belongs to the bacterial ribosomal protein bL19 family.

Functionally, this protein is located at the 30S-50S ribosomal subunit interface and may play a role in the structure and function of the aminoacyl-tRNA binding site. The chain is Large ribosomal subunit protein bL19 from Xanthomonas euvesicatoria pv. vesicatoria (strain 85-10) (Xanthomonas campestris pv. vesicatoria).